We begin with the raw amino-acid sequence, 367 residues long: Phosphoribosylaminoimidazole-succinocarboxamide synthase (367 aa).

The protein belongs to the SAICAR synthetase family.

The catalysed reaction is 5-amino-1-(5-phospho-D-ribosyl)imidazole-4-carboxylate + L-aspartate + ATP = (2S)-2-[5-amino-1-(5-phospho-beta-D-ribosyl)imidazole-4-carboxamido]succinate + ADP + phosphate + 2 H(+). Its pathway is purine metabolism; IMP biosynthesis via de novo pathway; 5-amino-1-(5-phospho-D-ribosyl)imidazole-4-carboxamide from 5-amino-1-(5-phospho-D-ribosyl)imidazole-4-carboxylate: step 1/2. The protein is Phosphoribosylaminoimidazole-succinocarboxamide synthase of Shewanella piezotolerans (strain WP3 / JCM 13877).